The chain runs to 214 residues: Anti-sigma-F factor NrsF (214 aa).

Residues 1–25 (MRTDDLIDALAADAGRGTEPAPPRR) lie on the Cytoplasmic side of the membrane. Residues 26–46 (LALVAGLGGVAALLLVLGWLQ) traverse the membrane as a helical segment. The Periplasmic portion of the chain corresponds to 47–53 (ARPDLGQ). The chain crosses the membrane as a helical span at residues 54–74 (AILGPMFWVKAIYTGLLGLAG). At 75-90 (YLAVERLSRPGGSGRR) the chain is on the cytoplasmic side. A helical transmembrane segment spans residues 91-111 (GWIIGAVVFGACAVAGIYQAI). Over 112 to 134 (TSPDVQAALKLLHGYSWRSCSPR) the chain is Periplasmic. The helical transmembrane segment at 135–155 (ILVLGLPMLALGLWALRGMAP) threads the bilayer. The Cytoplasmic portion of the chain corresponds to 156 to 158 (TRP). A helical transmembrane segment spans residues 159 to 179 (GLAGFAMGLFSGGVVATLYGL). The Periplasmic segment spans residues 180–185 (HCPEHT). A helical transmembrane segment spans residues 186–206 (FTFLALWYSLGVLALGLIGGW). Topologically, residues 207–214 (AGRWLLRW) are cytoplasmic.

This sequence belongs to the NrsF anti-sigma-F factor family.

The protein resides in the cell inner membrane. An anti-sigma factor for extracytoplasmic function (ECF) sigma factor sigma-F (SigF), which responds to chromate and cadmium. Overexpression leads to loss of response to dichromate. ECF sigma factors are held in an inactive form by a cognate anti-sigma factor. This is Anti-sigma-F factor NrsF from Caulobacter vibrioides (strain NA1000 / CB15N) (Caulobacter crescentus).